The primary structure comprises 48 residues: Large ribosomal subunit protein bL33B (48 aa).

Belongs to the bacterial ribosomal protein bL33 family.

This Lactococcus lactis subsp. cremoris (strain MG1363) protein is Large ribosomal subunit protein bL33B.